The following is a 382-amino-acid chain: Chorismate synthase (382 aa).

Positions 39 and 45 each coordinate NADP(+). Residues 127–129 (RAS), 245–246 (QA), G290, 305–309 (KPIPT), and R331 each bind FMN.

The protein belongs to the chorismate synthase family. As to quaternary structure, homotetramer. The cofactor is FMNH2.

The enzyme catalyses 5-O-(1-carboxyvinyl)-3-phosphoshikimate = chorismate + phosphate. Its pathway is metabolic intermediate biosynthesis; chorismate biosynthesis; chorismate from D-erythrose 4-phosphate and phosphoenolpyruvate: step 7/7. Its function is as follows. Catalyzes the anti-1,4-elimination of the C-3 phosphate and the C-6 proR hydrogen from 5-enolpyruvylshikimate-3-phosphate (EPSP) to yield chorismate, which is the branch point compound that serves as the starting substrate for the three terminal pathways of aromatic amino acid biosynthesis. This reaction introduces a second double bond into the aromatic ring system. The protein is Chorismate synthase of Desulfitobacterium hafniense (strain DSM 10664 / DCB-2).